Consider the following 630-residue polypeptide: tRNA uridine 5-carboxymethylaminomethyl modification enzyme MnmG (630 aa).

An FAD-binding site is contributed by 13-18 (GGGHAG). 273 to 287 (GPRYCPSIEDKIHRF) serves as a coordination point for NAD(+).

This sequence belongs to the MnmG family. In terms of assembly, homodimer. Heterotetramer of two MnmE and two MnmG subunits. FAD is required as a cofactor.

It localises to the cytoplasm. In terms of biological role, NAD-binding protein involved in the addition of a carboxymethylaminomethyl (cmnm) group at the wobble position (U34) of certain tRNAs, forming tRNA-cmnm(5)s(2)U34. This is tRNA uridine 5-carboxymethylaminomethyl modification enzyme MnmG from Pseudomonas putida (Arthrobacter siderocapsulatus).